We begin with the raw amino-acid sequence, 721 residues long: Solute carrier family 12 member 8 (721 aa).

The next 11 helical transmembrane spans lie at 53–73 (FGTW…VVLF), 84–104 (GVLL…VTVL), 115–135 (IGSG…VGGT), 136–156 (IGVL…TGFA), 174–194 (ISLA…KWII), 196–216 (LQLL…IGSF), 247–267 (FFTV…GFNM), 283–303 (LAAI…LGAI), 321–341 (LVGG…CMGG), 374–394 (PVAA…IGQV), and 397–417 (LAPI…YSYF). 2 disordered regions span residues 473 to 505 (PNHT…KQTL) and 533 to 580 (NESQ…STVA). Residues 553–565 (TESDEPDSEEDVD) are compositionally biased toward acidic residues. Transmembrane regions (helical) follow at residues 606–626 (FLGA…YALV) and 628–648 (LGVA…LNPG).

Belongs to the SLC12A transporter family.

The protein resides in the membrane. Its function is as follows. Cation/chloride cotransporter. The sequence is that of Solute carrier family 12 member 8 (slc12a8) from Xenopus laevis (African clawed frog).